The chain runs to 213 residues: Probable chemoreceptor glutamine deamidase CheD (213 aa).

The span at 1–12 shows a compositional bias: basic residues; it reads MNRHRPHSHRSK. The tract at residues 1-25 is disordered; it reads MNRHRPHSHRSKPASTQDQPDSVRR.

It belongs to the CheD family.

It catalyses the reaction L-glutaminyl-[protein] + H2O = L-glutamyl-[protein] + NH4(+). In terms of biological role, probably deamidates glutamine residues to glutamate on methyl-accepting chemotaxis receptors (MCPs), playing an important role in chemotaxis. The polypeptide is Probable chemoreceptor glutamine deamidase CheD (Rhodopseudomonas palustris (strain BisA53)).